The sequence spans 358 residues: Putative purine permease 12 (358 aa).

10 consecutive transmembrane segments (helical) span residues 29-49, 62-82, 100-120, 128-148, 153-173, 189-209, 235-255, 280-299, 300-316, and 320-340; these read WILV…SVLL, WIST…LSLL, LVWI…LYSV, STYS…YYYI, ITCL…LVSL, LIGC…LSLM, VASC…LLSV, LGCV…FSNL, ISTL…IAVF, and LTEV…FYIY.

It belongs to the purine permeases (TC 2.A.7.14) family.

The protein resides in the membrane. In Arabidopsis thaliana (Mouse-ear cress), this protein is Putative purine permease 12 (PUP12).